A 225-amino-acid chain; its full sequence is PKHD-type hydroxylase YbiX (225 aa).

A Fe2OG dioxygenase domain is found at 78–177; that stretch reads TLSTPLFNRY…RVASFMWIQS (100 aa). Residues histidine 96, aspartate 98, and histidine 158 each coordinate Fe cation. A 2-oxoglutarate-binding site is contributed by arginine 168.

Requires Fe(2+) as cofactor. It depends on L-ascorbate as a cofactor.

The sequence is that of PKHD-type hydroxylase YbiX from Shigella dysenteriae serotype 1 (strain Sd197).